The sequence spans 1430 residues: MGARASVLSGGKLDAWEKIRLRPGGKKKYKLKHLVWASRELERFALNPGLLETTEGCRQIITQIQPSIQTGSEEIKSLYNTIAVLYFVHQKIEVKDTKEALDKLEEEQNKSQRKTQQEAADKGVSQNYPIVQNLQGQMVHQALSPRTLNAWVKVIEEKAFSPEVIPMFTALSEGATPQDLNTMLNTVGGHQAAMQMLKDTINDEAAEWDRLHPVHAGPIPPGQMREPRGSDIAGTTSTLQEQIAWMTSNPPVPVGEIYKRWIILGLNKIVRMYSPVSILDIRQGPKEPFRDYVDRFFKTLRAEQATQEVKNWMTDTLLVQNANPDCKTILKALGPGASLEEMMTACQGVGGPSHKARILAEAMSQVTNPVVMMQKGNFKGHRKIVKCFNCGKEGHIARNCRAPRKKGCWKCGKEGHQMKDCTERQANFFRENLAFPQGEAREFSSEQTRANSPTSRELRVRGGDNPLSEAGDQRQGTEPSFNFPQITLWQRPIVTIKVGGQLREALLDTGADDTVLEEINLPGKWKPKMIGGIGGFIKVRQYDQVLIEICGQKAIGTVLVGPTPVNIIGRNLLTQIGCTLNFPISPIETVPVKLKPGMDGPKVKQWPLTEEKIKALTEICTEMEKEGKISKIGPENPYNTPVFAIKKKDSTKWRKLVDFRELNKRTQDFWEVQLGIPHPAGLKKKKSVTVLDVGDAYFSVPLDKDFRKYTAFTIPSINNETPGVRYQYNVLPQGWKGSPAIFQHSMTKILEPFRIKNPEMVIYQYMDDLYVGSDLEIGQPRTKIEELREHLLKWGFTTPDKKHQKEPPFLWMGYELHPDKWTVQPIQLPDKDSWTVNDIQKLVGKLNWASQIYPGIKVKQLCKLLRGVKALTDIVPLTAEAELELAENREILKEPVHGVYYDPSKDLIAEIQKQGNDQWTYQIYQEPHKNLKTGKYARMRSAHTNDVKQLTEAVQKIATEGIVIWGKTPKFRLPIQKETWETWWTEYWQATWIPEWEFVNTPPLVKLWYQLETEPIVGAETFYVDGAAHRETKKGRAGYVTDRGRQKVVSITETTNQKAELQAICLALQDSGSEVNIVTDSQYALGIIQAQPDKSESDLVNQIIEQLIKKERIYLSWVPAHKGIGGNEQVDKLVSAGIRKVLFLDGIDKAQEEHEKYHNNWRAMASDFNLPPIVAKEIVASCDKCQLKGEAIHGQVDCSPGIWQLDCTHLEGKIILVAVHVASGYIEAEVIPAETGQETAYFILKLAGRWPVKVIHTDNGTNFTSTVVKAACWWAGVKQEFGIPYNPQSQGVVESMNKELKKIIGQVRDQAEHLKTAVQMAVFIHNFKRKGGIGGYSAGERIVDIIATDIQTKELQKQILNIQKFRVYYRDSREPIWKGPAKLLWKGEGAVVIQDNSEIKVVPRRKAKIIRDYGKQMAGDDCVAGRQDED.

A lipid anchor (N-myristoyl glycine; by host) is attached at glycine 2. The tract at residues 7 to 31 is interaction with Gp41; that stretch reads VLSGGKLDAWEKIRLRPGGKKKYKL. The interaction with host CALM1 stretch occupies residues 8–43; sequence LSGGKLDAWEKIRLRPGGKKKYKLKHLVWASRELER. Residues 12-19 are interaction with host AP3D1; sequence KLDAWEKI. The segment at 14-33 is interaction with membrane phosphatidylinositol 4,5-bisphosphate and RNA; the sequence is DAWEKIRLRPGGKKKYKLKH. The Nuclear export signal motif lies at 16–22; the sequence is WEKIRLR. The Nuclear localization signal motif lies at 26 to 32; the sequence is KKKYKLK. The interval 73 to 77 is interaction with membrane phosphatidylinositol 4,5-bisphosphate; it reads EEIKS. Tyrosine 128 carries the phosphotyrosine; by host modification. Residues 185-223 form an interaction with human PPIA/CYPA and NUP153 region; that stretch reads NTVGGHQAAMQMLKDTINDEAAEWDRLHPVHAGPIPPGQ. A dimerization/Multimerization of capsid protein p24 region spans residues 273 to 359; that stretch reads YSPVSILDIR…GGPSHKARIL (87 aa). CCHC-type zinc fingers lie at residues 385–402 and 406–423; these read VKCFNCGKEGHIARNCRA and KGCWKCGKEGHQMKDCTE. The interval 439-480 is disordered; that stretch reads EAREFSSEQTRANSPTSRELRVRGGDNPLSEAGDQRQGTEPS. Positions 445-455 are enriched in polar residues; sequence SEQTRANSPTS. Residues 484–488 are dimerization of protease; that stretch reads PQITL. Positions 503–572 constitute a Peptidase A2 domain; the sequence is REALLDTGAD…TPVNIIGRNL (70 aa). The For protease activity; shared with dimeric partner role is filled by aspartate 508. Dimerization of protease regions lie at residues 532–538 and 571–583; these read GIGGFIK and NLLTQIGCTLNFP. The region spanning 626-816 is the Reverse transcriptase domain; it reads EGKISKIGPE…PPFLWMGYEL (191 aa). 3 residues coordinate Mg(2+): aspartate 692, aspartate 767, and aspartate 768. The tract at residues 809-817 is RT 'primer grip'; the sequence is FLWMGYELH. The Tryptophan repeat motif motif lies at 980–996; sequence WETWWTEYWQATWIPEW. The 124-residue stretch at 1016–1139 folds into the RNase H type-1 domain; it reads IVGAETFYVD…VDKLVSAGIR (124 aa). The Mg(2+) site is built by aspartate 1025, glutamate 1060, aspartate 1080, and aspartate 1131. An Integrase-type zinc finger spans residues 1145 to 1186; it reads DGIDKAQEEHEKYHNNWRAMASDFNLPPIVAKEIVASCDKCQ. Zn(2+)-binding residues include histidine 1154, histidine 1158, cysteine 1182, and cysteine 1185. Residues 1196 to 1346 enclose the Integrase catalytic domain; sequence VDCSPGIWQL…SAGERIVDII (151 aa). Residues aspartate 1206, aspartate 1258, and glutamate 1294 each coordinate Mg(2+). Residues 1365–1412 constitute a DNA-binding region (integrase-type); that stretch reads FRVYYRDSREPIWKGPAKLLWKGEGAVVIQDNSEIKVVPRRKAKIIRD.

In terms of assembly, homotrimer; further assembles as hexamers of trimers. Interacts with gp41 (via C-terminus). Interacts with host CALM1; this interaction induces a conformational change in the Matrix protein, triggering exposure of the myristate group. Interacts with host AP3D1; this interaction allows the polyprotein trafficking to multivesicular bodies during virus assembly. Part of the pre-integration complex (PIC) which is composed of viral genome, matrix protein, Vpr and integrase. As to quaternary structure, homodimer; the homodimer further multimerizes as homohexamers or homopentamers. Interacts with human PPIA/CYPA; This interaction stabilizes the capsid. Interacts with human NUP153. Interacts with host PDZD8; this interaction stabilizes the capsid. Interacts with monkey TRIM5; this interaction destabilizes the capsid. Homodimer, whose active site consists of two apposed aspartic acid residues. In terms of assembly, heterodimer of p66 RT and p51 RT (RT p66/p51). Heterodimerization of RT is essential for DNA polymerase activity. The overall folding of the subdomains is similar in p66 RT and p51 RT but the spatial arrangements of the subdomains are dramatically different. As to quaternary structure, homotetramer; may further associate as a homohexadecamer. Part of the pre-integration complex (PIC) which is composed of viral genome, matrix protein, Vpr and integrase. Interacts with human SMARCB1/INI1 and human PSIP1/LEDGF isoform 1. Interacts with human KPNA3; this interaction might play a role in nuclear import of the pre-integration complex. Interacts with human NUP153; this interaction might play a role in nuclear import of the pre-integration complex. The cofactor is Mg(2+). In terms of processing, specific enzymatic cleavages by the viral protease yield mature proteins. The protease is released by autocatalytic cleavage. The polyprotein is cleaved during and after budding, this process is termed maturation. Proteolytic cleavage of p66 RT removes the RNase H domain to yield the p51 RT subunit. Nucleocapsid protein p7 might be further cleaved after virus entry. Tyrosine phosphorylated presumably in the virion by a host kinase. Phosphorylation is apparently not a major regulator of membrane association. Post-translationally, phosphorylated possibly by host MAPK1; this phosphorylation is necessary for Pin1-mediated virion uncoating. In terms of processing, methylated by host PRMT6, impairing its function by reducing RNA annealing and the initiation of reverse transcription.

It localises to the host cell membrane. The protein resides in the host endosome. It is found in the host multivesicular body. The protein localises to the virion membrane. Its subcellular location is the host nucleus. It localises to the host cytoplasm. The protein resides in the virion. The catalysed reaction is Specific for a P1 residue that is hydrophobic, and P1' variable, but often Pro.. The enzyme catalyses Endohydrolysis of RNA in RNA/DNA hybrids. Three different cleavage modes: 1. sequence-specific internal cleavage of RNA. Human immunodeficiency virus type 1 and Moloney murine leukemia virus enzymes prefer to cleave the RNA strand one nucleotide away from the RNA-DNA junction. 2. RNA 5'-end directed cleavage 13-19 nucleotides from the RNA end. 3. DNA 3'-end directed cleavage 15-20 nucleotides away from the primer terminus.. It catalyses the reaction 3'-end directed exonucleolytic cleavage of viral RNA-DNA hybrid.. It carries out the reaction DNA(n) + a 2'-deoxyribonucleoside 5'-triphosphate = DNA(n+1) + diphosphate. Protease: The viral protease is inhibited by many synthetic protease inhibitors (PIs), such as amprenavir, atazanavir, indinavir, loprinavir, nelfinavir, ritonavir and saquinavir. Use of protease inhibitors in tritherapy regimens permit more ambitious therapeutic strategies. Reverse transcriptase/ribonuclease H: RT can be inhibited either by nucleoside RT inhibitors (NRTIs) or by non nucleoside RT inhibitors (NNRTIs). NRTIs act as chain terminators, whereas NNRTIs inhibit DNA polymerization by binding a small hydrophobic pocket near the RT active site and inducing an allosteric change in this region. Classical NRTIs are abacavir, adefovir (PMEA), didanosine (ddI), lamivudine (3TC), stavudine (d4T), tenofovir (PMPA), zalcitabine (ddC), and zidovudine (AZT). Classical NNRTIs are atevirdine (BHAP U-87201E), delavirdine, efavirenz (DMP-266), emivirine (I-EBU), and nevirapine (BI-RG-587). The tritherapies used as a basic effective treatment of AIDS associate two NRTIs and one NNRTI. In terms of biological role, mediates, with Gag polyprotein, the essential events in virion assembly, including binding the plasma membrane, making the protein-protein interactions necessary to create spherical particles, recruiting the viral Env proteins, and packaging the genomic RNA via direct interactions with the RNA packaging sequence (Psi). Gag-Pol polyprotein may regulate its own translation, by the binding genomic RNA in the 5'-UTR. At low concentration, the polyprotein would promote translation, whereas at high concentration, the polyprotein would encapsidate genomic RNA and then shut off translation. Its function is as follows. Targets the polyprotein to the plasma membrane via a multipartite membrane-binding signal, that includes its myristoylated N-terminus. Matrix protein is part of the pre-integration complex. Implicated in the release from host cell mediated by Vpu. Binds to RNA. Forms the conical core that encapsulates the genomic RNA-nucleocapsid complex in the virion. Most core are conical, with only 7% tubular. The core is constituted by capsid protein hexamer subunits. The core is disassembled soon after virion entry. Host restriction factors such as TRIM5-alpha or TRIMCyp bind retroviral capsids and cause premature capsid disassembly, leading to blocks in reverse transcription. Capsid restriction by TRIM5 is one of the factors which restricts HIV-1 to the human species. Host PIN1 apparently facilitates the virion uncoating. On the other hand, interactions with PDZD8 or CYPA stabilize the capsid. Functionally, encapsulates and protects viral dimeric unspliced genomic RNA (gRNA). Binds these RNAs through its zinc fingers. Acts as a nucleic acid chaperone which is involved in rearangement of nucleic acid secondary structure during gRNA retrotranscription. Also facilitates template switch leading to recombination. As part of the polyprotein, participates in gRNA dimerization, packaging, tRNA incorporation and virion assembly. In terms of biological role, aspartyl protease that mediates proteolytic cleavages of Gag and Gag-Pol polyproteins during or shortly after the release of the virion from the plasma membrane. Cleavages take place as an ordered, step-wise cascade to yield mature proteins. This process is called maturation. Displays maximal activity during the budding process just prior to particle release from the cell. Also cleaves Nef and Vif, probably concomitantly with viral structural proteins on maturation of virus particles. Hydrolyzes host EIF4GI and PABP1 in order to shut off the capped cellular mRNA translation. The resulting inhibition of cellular protein synthesis serves to ensure maximal viral gene expression and to evade host immune response. Also mediates cleavage of host YTHDF3. Mediates cleavage of host CARD8, thereby activating the CARD8 inflammasome, leading to the clearance of latent HIV-1 in patient CD4(+) T-cells after viral reactivation; in contrast, HIV-1 can evade CARD8-sensing when its protease remains inactive in infected cells prior to viral budding. Its function is as follows. Multifunctional enzyme that converts the viral RNA genome into dsDNA in the cytoplasm, shortly after virus entry into the cell. This enzyme displays a DNA polymerase activity that can copy either DNA or RNA templates, and a ribonuclease H (RNase H) activity that cleaves the RNA strand of RNA-DNA heteroduplexes in a partially processive 3' to 5' endonucleasic mode. Conversion of viral genomic RNA into dsDNA requires many steps. A tRNA(3)-Lys binds to the primer-binding site (PBS) situated at the 5'-end of the viral RNA. RT uses the 3' end of the tRNA primer to perform a short round of RNA-dependent minus-strand DNA synthesis. The reading proceeds through the U5 region and ends after the repeated (R) region which is present at both ends of viral RNA. The portion of the RNA-DNA heteroduplex is digested by the RNase H, resulting in a ssDNA product attached to the tRNA primer. This ssDNA/tRNA hybridizes with the identical R region situated at the 3' end of viral RNA. This template exchange, known as minus-strand DNA strong stop transfer, can be either intra- or intermolecular. RT uses the 3' end of this newly synthesized short ssDNA to perform the RNA-dependent minus-strand DNA synthesis of the whole template. RNase H digests the RNA template except for two polypurine tracts (PPTs) situated at the 5'-end and near the center of the genome. It is not clear if both polymerase and RNase H activities are simultaneous. RNase H probably can proceed both in a polymerase-dependent (RNA cut into small fragments by the same RT performing DNA synthesis) and a polymerase-independent mode (cleavage of remaining RNA fragments by free RTs). Secondly, RT performs DNA-directed plus-strand DNA synthesis using the PPTs that have not been removed by RNase H as primers. PPTs and tRNA primers are then removed by RNase H. The 3' and 5' ssDNA PBS regions hybridize to form a circular dsDNA intermediate. Strand displacement synthesis by RT to the PBS and PPT ends produces a blunt ended, linear dsDNA copy of the viral genome that includes long terminal repeats (LTRs) at both ends. Catalyzes viral DNA integration into the host chromosome, by performing a series of DNA cutting and joining reactions. This enzyme activity takes place after virion entry into a cell and reverse transcription of the RNA genome in dsDNA. The first step in the integration process is 3' processing. This step requires a complex comprising the viral genome, matrix protein, Vpr and integrase. This complex is called the pre-integration complex (PIC). The integrase protein removes 2 nucleotides from each 3' end of the viral DNA, leaving recessed CA OH's at the 3' ends. In the second step, the PIC enters cell nucleus. This process is mediated through integrase and Vpr proteins, and allows the virus to infect a non dividing cell. This ability to enter the nucleus is specific of lentiviruses, other retroviruses cannot and rely on cell division to access cell chromosomes. In the third step, termed strand transfer, the integrase protein joins the previously processed 3' ends to the 5' ends of strands of target cellular DNA at the site of integration. The 5'-ends are produced by integrase-catalyzed staggered cuts, 5 bp apart. A Y-shaped, gapped, recombination intermediate results, with the 5'-ends of the viral DNA strands and the 3' ends of target DNA strands remaining unjoined, flanking a gap of 5 bp. The last step is viral DNA integration into host chromosome. This involves host DNA repair synthesis in which the 5 bp gaps between the unjoined strands are filled in and then ligated. Since this process occurs at both cuts flanking the HIV genome, a 5 bp duplication of host DNA is produced at the ends of HIV-1 integration. Alternatively, Integrase may catalyze the excision of viral DNA just after strand transfer, this is termed disintegration. In Homo sapiens (Human), this protein is Gag-Pol polyprotein (gag-pol).